A 244-amino-acid polypeptide reads, in one-letter code: Biosynthetic peptidoglycan transglycosylase (244 aa).

The chain crosses the membrane as a helical span at residues 25–45 (LLLLLTAALLYQSWFLLHIVY).

The protein belongs to the glycosyltransferase 51 family.

It is found in the cell inner membrane. It carries out the reaction [GlcNAc-(1-&gt;4)-Mur2Ac(oyl-L-Ala-gamma-D-Glu-L-Lys-D-Ala-D-Ala)](n)-di-trans,octa-cis-undecaprenyl diphosphate + beta-D-GlcNAc-(1-&gt;4)-Mur2Ac(oyl-L-Ala-gamma-D-Glu-L-Lys-D-Ala-D-Ala)-di-trans,octa-cis-undecaprenyl diphosphate = [GlcNAc-(1-&gt;4)-Mur2Ac(oyl-L-Ala-gamma-D-Glu-L-Lys-D-Ala-D-Ala)](n+1)-di-trans,octa-cis-undecaprenyl diphosphate + di-trans,octa-cis-undecaprenyl diphosphate + H(+). It participates in cell wall biogenesis; peptidoglycan biosynthesis. Its function is as follows. Peptidoglycan polymerase that catalyzes glycan chain elongation from lipid-linked precursors. The polypeptide is Biosynthetic peptidoglycan transglycosylase (Nitrosomonas europaea (strain ATCC 19718 / CIP 103999 / KCTC 2705 / NBRC 14298)).